The chain runs to 89 residues: Envelope glycoprotein N (89 aa).

The first 24 residues, 1–24, serve as a signal peptide directing secretion; that stretch reads MAPGRGVLLLICLCLMDNVSQVVC. The Virion surface portion of the chain corresponds to 25-56; the sequence is SQNSTTPSKFPTFYSYDCNADTYAPQLTSFST. The helical transmembrane segment at 57 to 77 threads the bilayer; it reads IWTLLNVLVMTIACVIYLIYM. Over 78 to 89 the chain is Intravirion; the sequence is CFNKFVATMTNT.

It belongs to the herpesviridae glycoprotein N family. In terms of assembly, interacts (via N-terminus) with gM (via N-terminus). The gM-gN heterodimer forms the gCII complex.

It is found in the virion membrane. It localises to the host membrane. The protein localises to the host Golgi apparatus. The protein resides in the host trans-Golgi network. Its function is as follows. Envelope glycoprotein necessary for proper maturation of gM and modulation of its membrane fusion activity. Also plays a critical role in virion morphogenesis. The sequence is that of Envelope glycoprotein N from Equine herpesvirus 2 (strain 86/87) (EHV-2).